The primary structure comprises 310 residues: Homoserine kinase (310 aa).

91–101 (PIGSGLGSSAC) is an ATP binding site.

Belongs to the GHMP kinase family. Homoserine kinase subfamily.

It is found in the cytoplasm. It carries out the reaction L-homoserine + ATP = O-phospho-L-homoserine + ADP + H(+). The protein operates within amino-acid biosynthesis; L-threonine biosynthesis; L-threonine from L-aspartate: step 4/5. Its function is as follows. Catalyzes the ATP-dependent phosphorylation of L-homoserine to L-homoserine phosphate. This chain is Homoserine kinase, found in Escherichia coli (strain SMS-3-5 / SECEC).